A 277-amino-acid chain; its full sequence is Phosphoenolpyruvate synthase regulatory protein (277 aa).

157-164 (GVSRCGKT) provides a ligand contact to ADP.

The protein belongs to the pyruvate, phosphate/water dikinase regulatory protein family. PSRP subfamily.

It catalyses the reaction [pyruvate, water dikinase] + ADP = [pyruvate, water dikinase]-phosphate + AMP + H(+). It carries out the reaction [pyruvate, water dikinase]-phosphate + phosphate + H(+) = [pyruvate, water dikinase] + diphosphate. Bifunctional serine/threonine kinase and phosphorylase involved in the regulation of the phosphoenolpyruvate synthase (PEPS) by catalyzing its phosphorylation/dephosphorylation. The sequence is that of Phosphoenolpyruvate synthase regulatory protein from Shigella boydii serotype 4 (strain Sb227).